Consider the following 282-residue polypeptide: MAAKIISGTELSKQIKANLADKITHYIEQGKRVPGLAVILVGADPASQIYVGNKRKSCEEVGILSKSYDLPETTTQNELLAIIDQLNADKNIDGILVQLPLPKQINAEAIIEHIDPKKDVDGFHPYNVGRLCQRIPTLRACTPYGVMKLLETTGIDLHGKHAVIVGASNIVGRPMSLELLLAGATVTVTHRFTKNLENHVRQADILVVAVGKPNLISGDWIKESAVVIDVGINRVDGKLVGDIEFDKAAEKAAYITPVPGGVGPMTVAMLMSNTLYAYEHNK.

NADP(+)-binding positions include glycine 166–serine 168 and isoleucine 232.

The protein belongs to the tetrahydrofolate dehydrogenase/cyclohydrolase family. Homodimer.

It catalyses the reaction (6R)-5,10-methylene-5,6,7,8-tetrahydrofolate + NADP(+) = (6R)-5,10-methenyltetrahydrofolate + NADPH. The catalysed reaction is (6R)-5,10-methenyltetrahydrofolate + H2O = (6R)-10-formyltetrahydrofolate + H(+). Its pathway is one-carbon metabolism; tetrahydrofolate interconversion. Functionally, catalyzes the oxidation of 5,10-methylenetetrahydrofolate to 5,10-methenyltetrahydrofolate and then the hydrolysis of 5,10-methenyltetrahydrofolate to 10-formyltetrahydrofolate. This chain is Bifunctional protein FolD, found in Haemophilus influenzae (strain PittGG).